We begin with the raw amino-acid sequence, 231 residues long: Putative N-acetylmannosamine-6-phosphate 2-epimerase (231 aa).

It belongs to the NanE family.

It catalyses the reaction an N-acyl-D-glucosamine 6-phosphate = an N-acyl-D-mannosamine 6-phosphate. It participates in amino-sugar metabolism; N-acetylneuraminate degradation; D-fructose 6-phosphate from N-acetylneuraminate: step 3/5. Functionally, converts N-acetylmannosamine-6-phosphate (ManNAc-6-P) to N-acetylglucosamine-6-phosphate (GlcNAc-6-P). The protein is Putative N-acetylmannosamine-6-phosphate 2-epimerase of Glaesserella parasuis serovar 5 (strain SH0165) (Haemophilus parasuis).